Here is a 314-residue protein sequence, read N- to C-terminus: Homoserine kinase (314 aa).

96–106 is an ATP binding site; it reads PIGSGLGSSAC.

It belongs to the GHMP kinase family. Homoserine kinase subfamily.

It localises to the cytoplasm. It catalyses the reaction L-homoserine + ATP = O-phospho-L-homoserine + ADP + H(+). The protein operates within amino-acid biosynthesis; L-threonine biosynthesis; L-threonine from L-aspartate: step 4/5. Catalyzes the ATP-dependent phosphorylation of L-homoserine to L-homoserine phosphate. This Histophilus somni (strain 129Pt) (Haemophilus somnus) protein is Homoserine kinase.